A 366-amino-acid polypeptide reads, in one-letter code: Histidinol-phosphate aminotransferase (366 aa).

Lys226 bears the N6-(pyridoxal phosphate)lysine mark.

The protein belongs to the class-II pyridoxal-phosphate-dependent aminotransferase family. Histidinol-phosphate aminotransferase subfamily. Requires pyridoxal 5'-phosphate as cofactor.

The catalysed reaction is L-histidinol phosphate + 2-oxoglutarate = 3-(imidazol-4-yl)-2-oxopropyl phosphate + L-glutamate. Its pathway is amino-acid biosynthesis; L-histidine biosynthesis; L-histidine from 5-phospho-alpha-D-ribose 1-diphosphate: step 7/9. This is Histidinol-phosphate aminotransferase from Methanosarcina barkeri (strain Fusaro / DSM 804).